The chain runs to 1124 residues: Phytochrome A (1124 aa).

The span at 1-19 (MSTTRPSQSSNNSGRSRNS) shows a compositional bias: low complexity. Positions 1–21 (MSTTRPSQSSNNSGRSRNSAR) are disordered. One can recognise a GAF domain in the interval 218–401 (SMERLCDTMV…VFAIHVNKEI (184 aa)). C323 provides a ligand contact to phytochromobilin. PAS domains follow at residues 617 to 687 (VTSE…LQGE) and 750 to 821 (DYKA…VNFG). The region spanning 901 to 1120 (YMKRQIRNPL…ILSVELAAAH (220 aa)) is the Histidine kinase domain.

This sequence belongs to the phytochrome family. Homodimer. Contains one covalently linked phytochromobilin chromophore.

In terms of biological role, regulatory photoreceptor which exists in two forms that are reversibly interconvertible by light: the Pr form that absorbs maximally in the red region of the spectrum and the Pfr form that absorbs maximally in the far-red region. Photoconversion of Pr to Pfr induces an array of morphogenic responses, whereas reconversion of Pfr to Pr cancels the induction of those responses. Pfr controls the expression of a number of nuclear genes including those encoding the small subunit of ribulose-bisphosphate carboxylase, chlorophyll A/B binding protein, protochlorophyllide reductase, rRNA, etc. It also controls the expression of its own gene(s) in a negative feedback fashion. This chain is Phytochrome A (PHYA), found in Pisum sativum (Garden pea).